The sequence spans 90 residues: Small ribosomal subunit protein bS16 (90 aa).

Belongs to the bacterial ribosomal protein bS16 family.

The protein is Small ribosomal subunit protein bS16 of Brevibacillus brevis (strain 47 / JCM 6285 / NBRC 100599).